The primary structure comprises 294 residues: Cytidine deaminase (294 aa).

2 CMP/dCMP-type deaminase domains span residues 48-168 and 186-294; these read DEDA…FGPK and LTGD…VLLG. 89-91 contributes to the substrate binding site; sequence NME. Zn(2+) is bound at residue H102. E104 functions as the Proton donor in the catalytic mechanism. The Zn(2+) site is built by C129 and C132.

Belongs to the cytidine and deoxycytidylate deaminase family. As to quaternary structure, homodimer. It depends on Zn(2+) as a cofactor.

It carries out the reaction cytidine + H2O + H(+) = uridine + NH4(+). The catalysed reaction is 2'-deoxycytidine + H2O + H(+) = 2'-deoxyuridine + NH4(+). Functionally, this enzyme scavenges exogenous and endogenous cytidine and 2'-deoxycytidine for UMP synthesis. This chain is Cytidine deaminase, found in Salmonella paratyphi A (strain ATCC 9150 / SARB42).